Here is a 138-residue protein sequence, read N- to C-terminus: ATP synthase epsilon chain (138 aa).

It belongs to the ATPase epsilon chain family. As to quaternary structure, F-type ATPases have 2 components, CF(1) - the catalytic core - and CF(0) - the membrane proton channel. CF(1) has five subunits: alpha(3), beta(3), gamma(1), delta(1), epsilon(1). CF(0) has three main subunits: a, b and c.

Its subcellular location is the cell inner membrane. In terms of biological role, produces ATP from ADP in the presence of a proton gradient across the membrane. The sequence is that of ATP synthase epsilon chain from Psychrobacter cryohalolentis (strain ATCC BAA-1226 / DSM 17306 / VKM B-2378 / K5).